The chain runs to 502 residues: Probable malate:quinone oxidoreductase (502 aa).

It belongs to the MQO family. Requires FAD as cofactor.

The enzyme catalyses (S)-malate + a quinone = a quinol + oxaloacetate. The protein operates within carbohydrate metabolism; tricarboxylic acid cycle; oxaloacetate from (S)-malate (quinone route): step 1/1. The sequence is that of Probable malate:quinone oxidoreductase from Synechococcus sp. (strain CC9902).